Consider the following 762-residue polypeptide: Lysyl oxidase homolog 2B (762 aa).

Residues 1-20 (MLALWSISFVLLCSWRLSYA) form the signal peptide. SRCR domains lie at 53 to 154 (LRLA…VVCS), 183 to 292 (IRPI…VSCI), 316 to 417 (VRLR…VKCN), and 427 to 536 (LRLS…VSCS). Intrachain disulfides connect C79-C143, C92-C153, C123-C133, C213-C281, C226-C291, C260-C270, C341-C406, C354-C416, and C385-C395. Residue N278 is glycosylated (N-linked (GlcNAc...) asparagine). An N-linked (GlcNAc...) asparagine glycan is attached at N447. Cystine bridges form between C456–C522, C469–C535, and C503–C513. The interval 540–742 (PDLVLNPQVV…WMYNCHIGGS (203 aa)) is lysyl-oxidase like. The Ca(2+) site is built by D541 and L542. Disulfide bonds link C565/C616, C571/C686, C648/C664, and C654/C676. Positions 617, 619, and 621 each coordinate Cu cation. Residue N635 is glycosylated (N-linked (GlcNAc...) asparagine). The lysine tyrosylquinone (Lys-Tyr) cross-link spans 644–680 (KASFCLEDSECDEGIEKRYECANFGEQGITVGCWDTY). Y680 carries the 2',4',5'-topaquinone modification. Ca(2+) contacts are provided by E713, D715, N718, and N719. Residues C723 and C737 are joined by a disulfide bond.

Belongs to the lysyl oxidase family. Cu cation serves as cofactor. Requires lysine tyrosylquinone residue as cofactor. Post-translationally, the lysine tyrosylquinone cross-link (LTQ) is generated by condensation of the epsilon-amino group of a lysine with a topaquinone produced by oxidation of tyrosine.

Its subcellular location is the secreted. The protein resides in the extracellular space. It localises to the extracellular matrix. The protein localises to the basement membrane. It is found in the nucleus. Its subcellular location is the chromosome. The protein resides in the endoplasmic reticulum. The catalysed reaction is L-lysyl-[protein] + O2 + H2O = (S)-2-amino-6-oxohexanoyl-[protein] + H2O2 + NH4(+). Its function is as follows. Mediates the post-translational oxidative deamination of lysine residues on target proteins leading to the formation of deaminated lysine (allysine). Acts as a transcription corepressor and specifically mediates deamination of trimethylated 'Lys-4' of histone H3 (H3K4me3), a specific tag for epigenetic transcriptional activation. Shows no activity against histone H3 when it is trimethylated on 'Lys-9' (H3K9me3) or 'Lys-27' (H3K27me3) or when 'Lys-4' is monomethylated (H3K4me1) or dimethylated (H3K4me2). Also mediates deamination of methylated TAF10, a member of the transcription factor IID (TFIID) complex, which induces release of TAF10 from promoters, leading to inhibition of TFIID-dependent transcription. LOXL2-mediated deamination of TAF10 results in transcriptional repression of genes required for embryonic stem cell pluripotency. Involved in epithelial to mesenchymal transition (EMT) and participates in repression of E-cadherin, probably by mediating deamination of histone H3. When secreted into the extracellular matrix, promotes cross-linking of extracellular matrix proteins by mediating oxidative deamination of peptidyl lysine residues in precursors to fibrous collagen and elastin. Acts as a regulator of sprouting angiogenesis, probably via collagen IV scaffolding. Acts as a regulator of chondrocyte differentiation, probably by regulating expression of factors that control chondrocyte differentiation. Required with loxl2a for correct expression of Sox2 and for neural differentiation. In Danio rerio (Zebrafish), this protein is Lysyl oxidase homolog 2B (loxl2b).